We begin with the raw amino-acid sequence, 331 residues long: Fructose-1,6-bisphosphatase class 1 2 (331 aa).

Mg(2+) contacts are provided by Glu80, Asp98, Leu100, and Asp101. Residues 101-104 (DGSS) and Asn189 each bind substrate. A Mg(2+)-binding site is contributed by Glu261.

This sequence belongs to the FBPase class 1 family. As to quaternary structure, homotetramer. Mg(2+) serves as cofactor.

It localises to the cytoplasm. The enzyme catalyses beta-D-fructose 1,6-bisphosphate + H2O = beta-D-fructose 6-phosphate + phosphate. The protein operates within carbohydrate biosynthesis; Calvin cycle. The polypeptide is Fructose-1,6-bisphosphatase class 1 2 (Cereibacter sphaeroides (strain ATCC 17029 / ATH 2.4.9) (Rhodobacter sphaeroides)).